Reading from the N-terminus, the 67-residue chain is Large ribosomal subunit protein bL35 (67 aa).

It belongs to the bacterial ribosomal protein bL35 family.

This Leptospira borgpetersenii serovar Hardjo-bovis (strain JB197) protein is Large ribosomal subunit protein bL35.